The chain runs to 185 residues: Ribosome-recycling factor (185 aa).

The tract at residues 135–159 (ANDKLKASEKNKEASEDEVKRAQEK) is disordered.

The protein belongs to the RRF family.

It is found in the cytoplasm. Functionally, responsible for the release of ribosomes from messenger RNA at the termination of protein biosynthesis. May increase the efficiency of translation by recycling ribosomes from one round of translation to another. This chain is Ribosome-recycling factor, found in Moorella thermoacetica (strain ATCC 39073 / JCM 9320).